Reading from the N-terminus, the 334-residue chain is Mediator of RNA polymerase II transcription subunit 4 (334 aa).

A coiled-coil region spans residues leucine 76–alanine 100. Residues serine 188 to serine 203 are compositionally biased toward low complexity. Disordered regions lie at residues serine 188 to alanine 234 and glutamate 252 to lysine 334. Composition is skewed to polar residues over residues asparagine 204–aspartate 225 and alanine 264–serine 282.

Belongs to the Mediator complex subunit 4 family. In terms of assembly, component of the Mediator complex.

Its subcellular location is the nucleus. Component of the Mediator complex, a coactivator involved in the regulated transcription of nearly all RNA polymerase II-dependent genes. Mediator functions as a bridge to convey information from gene-specific regulatory proteins to the basal RNA polymerase II transcription machinery. Mediator is recruited to promoters by direct interactions with regulatory proteins and serves as a scaffold for the assembly of a functional preinitiation complex with RNA polymerase II and the general transcription factors. The protein is Mediator of RNA polymerase II transcription subunit 4 (mdt-4) of Caenorhabditis briggsae.